We begin with the raw amino-acid sequence, 210 residues long: Orotate phosphoribosyltransferase (210 aa).

Position 26 (K26) interacts with 5-phospho-alpha-D-ribose 1-diphosphate. 34 to 35 is an orotate binding site; it reads FF. 5-phospho-alpha-D-ribose 1-diphosphate is bound by residues 72 to 73, R98, K99, K102, H104, and 123 to 131; these read YK and DDVITAGTA. Orotate-binding residues include T127 and R155.

It belongs to the purine/pyrimidine phosphoribosyltransferase family. PyrE subfamily. Homodimer. It depends on Mg(2+) as a cofactor.

The catalysed reaction is orotidine 5'-phosphate + diphosphate = orotate + 5-phospho-alpha-D-ribose 1-diphosphate. The protein operates within pyrimidine metabolism; UMP biosynthesis via de novo pathway; UMP from orotate: step 1/2. Catalyzes the transfer of a ribosyl phosphate group from 5-phosphoribose 1-diphosphate to orotate, leading to the formation of orotidine monophosphate (OMP). This Legionella pneumophila (strain Paris) protein is Orotate phosphoribosyltransferase.